Here is a 795-residue protein sequence, read N- to C-terminus: Inactive N-acetylated-alpha-linked acidic dipeptidase-like protein 2 (795 aa).

The interval 1–38 (MGENEASLPNTSLQGKKMAYQKVHADQRAPGHSQYLDN) is disordered. At 1–121 (MGENEASLPN…RSAPKSNRCN (121 aa)) the chain is on the cytoplasmic side. Position 92 is a phosphoserine (serine 92). The chain crosses the membrane as a helical; Signal-anchor for type II membrane protein span at residues 122–142 (FCHVLKILCTATILFIFGILI). Residues 143–795 (GYYVHTNCPS…VFKSVLDGKN (653 aa)) lie on the Extracellular side of the membrane. N-linked (GlcNAc...) asparagine glycans are attached at residues asparagine 295, asparagine 373, asparagine 534, and asparagine 759.

The protein belongs to the peptidase M28 family. M28B subfamily. As to expression, expressed at higher level in kidney and placenta. In embryo, it is mainly confined to duodenal and stomach endoderm, mesonephros, metanephros and pancreas.

The protein localises to the membrane. Functionally, may be catalytically inactive. The polypeptide is Inactive N-acetylated-alpha-linked acidic dipeptidase-like protein 2 (NAALADL2) (Homo sapiens (Human)).